A 165-amino-acid polypeptide reads, in one-letter code: MRSAARVSRSNSHPRTRHPTRENEGTTWGSQPSRTERDGDRKCPPSILRPRRQECGCHGGEPQKTSRHVRFREPLEVAVHYIARKDTTAAIKVPSRPASHGGSPLQPASCSGSLFLWLTLCALLGVVLVLYCGQAKRVTAALEDLLAQLLALILRLWRVVLACWH.

The segment at 1 to 47 is disordered; that stretch reads MRSAARVSRSNSHPRTRHPTRENEGTTWGSQPSRTERDGDRKCPPSI. The span at 34 to 43 shows a compositional bias: basic and acidic residues; it reads RTERDGDRKC. Residues 112–132 traverse the membrane as a helical segment; the sequence is GSLFLWLTLCALLGVVLVLYC.

In terms of tissue distribution, predominantly expressed in white adipose tissue (at protein level) and brown adipose tissue. Also detected in heart.

Its subcellular location is the cell membrane. The chain is Nutritionally-regulated adipose and cardiac-enriched protein (Nrac) from Mus musculus (Mouse).